The chain runs to 310 residues: Methionyl-tRNA formyltransferase (310 aa).

109 to 112 (SLLP) is a binding site for (6S)-5,6,7,8-tetrahydrofolate.

Belongs to the Fmt family.

The enzyme catalyses L-methionyl-tRNA(fMet) + (6R)-10-formyltetrahydrofolate = N-formyl-L-methionyl-tRNA(fMet) + (6S)-5,6,7,8-tetrahydrofolate + H(+). Its function is as follows. Attaches a formyl group to the free amino group of methionyl-tRNA(fMet). The formyl group appears to play a dual role in the initiator identity of N-formylmethionyl-tRNA by promoting its recognition by IF2 and preventing the misappropriation of this tRNA by the elongation apparatus. The chain is Methionyl-tRNA formyltransferase from Chloroflexus aurantiacus (strain ATCC 29366 / DSM 635 / J-10-fl).